The chain runs to 373 residues: MSDNSKIRVVVGMSGGVDSSVTALLLKEQGYDVIGVFMKNWDDTDEFGVCTATEDYKDVAAVADQIGIPYYSVNFEKEYWDRVFEYFLSEYKAGRTPNPDVMCNKEIKFKAFLDYAMTLGADYVATGHYAQVRRDEDGIVHMLRGVDNGKDQTYFLSQLSQEQLQKTMFPLGHLQKSEVREIAERAGLATAKKKDSTGICFIGEKNFKQFLSQYLPAQKGRMMTVDGRDMGEHAGLMYYTIGQRGGLGIGGQHGGDNQPWFVVGKDLSKNILYVGQGFYHESLMSTSLQASVIHFTRDMPSEFTLECTAKFRYRQPDSKVTVYVKGEHAEVVFDEPQRAITPGQAVVFYDAEECLGGGIIDMAFKDGVACQYI.

Residues 12-19 and Met38 contribute to the ATP site; that span reads GMSGGVDS. Positions 98 to 100 are interaction with target base in tRNA; it reads NPD. Cys103 (nucleophile) is an active-site residue. Residues Cys103 and Cys200 are joined by a disulfide bond. Gly127 contacts ATP. The interaction with tRNA stretch occupies residues 150–152; the sequence is KDQ. Cys200 acts as the Cysteine persulfide intermediate in catalysis. The interaction with tRNA stretch occupies residues 312–313; that stretch reads RY.

The protein belongs to the MnmA/TRMU family.

It is found in the cytoplasm. It carries out the reaction S-sulfanyl-L-cysteinyl-[protein] + uridine(34) in tRNA + AH2 + ATP = 2-thiouridine(34) in tRNA + L-cysteinyl-[protein] + A + AMP + diphosphate + H(+). Catalyzes the 2-thiolation of uridine at the wobble position (U34) of tRNA, leading to the formation of s(2)U34. The protein is tRNA-specific 2-thiouridylase MnmA of Streptococcus uberis (strain ATCC BAA-854 / 0140J).